Here is a 150-residue protein sequence, read N- to C-terminus: UPF0756 membrane protein APL_0366 (150 aa).

Helical transmembrane passes span 12–34 (LVVLIFLGVVGNNNSITIAATVL), 52–72 (HGLSIGIIILTIGVLSPIVSG), 82–102 (FLNWKMLLAVVAGIAVAWLGG), and 123–143 (IIGVALLGGVPVGPLIAAGIL).

It belongs to the UPF0756 family.

The protein resides in the cell membrane. This is UPF0756 membrane protein APL_0366 from Actinobacillus pleuropneumoniae serotype 5b (strain L20).